A 434-amino-acid chain; its full sequence is Nicotinate phosphoribosyltransferase (434 aa).

H242 is modified (phosphohistidine; by autocatalysis).

The protein belongs to the NAPRTase family. In terms of processing, transiently phosphorylated on a His residue during the reaction cycle. Phosphorylation strongly increases the affinity for substrates and increases the rate of nicotinate D-ribonucleotide production. Dephosphorylation regenerates the low-affinity form of the enzyme, leading to product release.

The catalysed reaction is nicotinate + 5-phospho-alpha-D-ribose 1-diphosphate + ATP + H2O = nicotinate beta-D-ribonucleotide + ADP + phosphate + diphosphate. Its pathway is cofactor biosynthesis; NAD(+) biosynthesis; nicotinate D-ribonucleotide from nicotinate: step 1/1. Functionally, catalyzes the synthesis of beta-nicotinate D-ribonucleotide from nicotinate and 5-phospho-D-ribose 1-phosphate at the expense of ATP. The sequence is that of Nicotinate phosphoribosyltransferase from Brucella anthropi (strain ATCC 49188 / DSM 6882 / CCUG 24695 / JCM 21032 / LMG 3331 / NBRC 15819 / NCTC 12168 / Alc 37) (Ochrobactrum anthropi).